We begin with the raw amino-acid sequence, 251 residues long: uncharacterized protein (251 aa).

Residues C192–K238 form an RING-type zinc finger.

Its subcellular location is the cytoplasm. This is an uncharacterized protein from Schizosaccharomyces pombe (strain 972 / ATCC 24843) (Fission yeast).